The primary structure comprises 126 residues: Large ribosomal subunit protein uL24 (126 aa).

The disordered stretch occupies residues 1 to 23 (MKFSRDVTSSRRKQRKAHFGAPS).

This sequence belongs to the universal ribosomal protein uL24 family. In terms of assembly, component of the large ribosomal subunit (LSU). Mature yeast ribosomes consist of a small (40S) and a large (60S) subunit. The 40S small subunit contains 1 molecule of ribosomal RNA (18S rRNA) and at least 33 different proteins. The large 60S subunit contains 3 rRNA molecules (25S, 5.8S and 5S rRNA) and at least 46 different proteins.

Its subcellular location is the cytoplasm. The protein localises to the nucleus. It is found in the nucleolus. Functionally, component of the ribosome, a large ribonucleoprotein complex responsible for the synthesis of proteins in the cell. The small ribosomal subunit (SSU) binds messenger RNAs (mRNAs) and translates the encoded message by selecting cognate aminoacyl-transfer RNA (tRNA) molecules. The large subunit (LSU) contains the ribosomal catalytic site termed the peptidyl transferase center (PTC), which catalyzes the formation of peptide bonds, thereby polymerizing the amino acids delivered by tRNAs into a polypeptide chain. The nascent polypeptides leave the ribosome through a tunnel in the LSU and interact with protein factors that function in enzymatic processing, targeting, and the membrane insertion of nascent chains at the exit of the ribosomal tunnel. The protein is Large ribosomal subunit protein uL24 (rpl26) of Schizosaccharomyces pombe (strain 972 / ATCC 24843) (Fission yeast).